A 93-amino-acid chain; its full sequence is Phosphoribosyl-ATP pyrophosphatase (93 aa).

The protein belongs to the PRA-PH family.

Its subcellular location is the cytoplasm. It carries out the reaction 1-(5-phospho-beta-D-ribosyl)-ATP + H2O = 1-(5-phospho-beta-D-ribosyl)-5'-AMP + diphosphate + H(+). It participates in amino-acid biosynthesis; L-histidine biosynthesis; L-histidine from 5-phospho-alpha-D-ribose 1-diphosphate: step 2/9. In Mycolicibacterium paratuberculosis (strain ATCC BAA-968 / K-10) (Mycobacterium paratuberculosis), this protein is Phosphoribosyl-ATP pyrophosphatase.